A 694-amino-acid polypeptide reads, in one-letter code: Cyclic nucleotide-gated channel beta-3 (694 aa).

Topologically, residues 1 to 210 (MLKSLTVKFN…SIDSYTDRVY (210 aa)) are cytoplasmic. 2 disordered regions span residues 24–82 (CPNL…DPEC) and 146–177 (ENFP…KEHQ). Polar residues-rich tracts occupy residues 26 to 40 (NLSS…QGDN) and 153 to 168 (ASSQ…PKQE). Residues 211–234 (LLWLLLVTIAYNWNCWLLPVRLVF) form a helical membrane-spanning segment. Residues 235–241 (PCQTPDN) lie on the Extracellular side of the membrane. The chain crosses the membrane as a helical span at residues 242-262 (KNYWIITDIVCDIIYLCDILL). Topologically, residues 263–291 (IQPRLQFVRGGEIIVDSNELKRNYRSSTK) are cytoplasmic. The helical transmembrane segment at 292 to 309 (FRMDVASLLPFEVLYIFF) threads the bilayer. At 310–312 (GVN) the chain is on the extracellular side. A helical transmembrane segment spans residues 313 to 327 (PIFRANRILKYTSFF). Residues 328–340 (EFNHHLESIMDKA) are Cytoplasmic-facing. The segment at 340–439 (AYVYRVIRTT…IGQMRDVIGA (100 aa)) is ion conduction pathway. A helical transmembrane segment spans residues 341–363 (YVYRVIRTTGYLLFLLHINACVY). Residues 364–385 (YWASDYEGIGSTKWVYNGEGNK) lie on the Extracellular side of the membrane. 2 helical membrane passes run 386 to 412 (YLRC…SFEI) and 413 to 437 (VFQF…RDVI). The tract at residues 399–402 (TIGG) is selectivity filter. Over 438–694 (GAATANQNYF…KGKRKTTTQK (257 aa)) the chain is Cytoplasmic. The tract at residues 442–518 (ANQNYFQACM…SIIDKVELFK (77 aa)) is C-linker. The interval 522 to 638 (TQMIYDLLLR…LLMKKAKILL (117 aa)) is cyclic nucleotide-binding domain. Residues glycine 583, glutamate 584, arginine 596, and threonine 597 each coordinate 3',5'-cyclic GMP.

Belongs to the cyclic nucleotide-gated cation channel (TC 1.A.1.5) family. CNGB3 subfamily. As to quaternary structure, forms heterotetrameric channels composed of CNGA3 and CNGB3 subunits with 3:1 stoichiometry. Small subset of retinal photoreceptor cells and testis.

It localises to the cell membrane. The enzyme catalyses Ca(2+)(in) = Ca(2+)(out). The catalysed reaction is Na(+)(in) = Na(+)(out). It catalyses the reaction K(+)(in) = K(+)(out). It carries out the reaction NH4(+)(in) = NH4(+)(out). The enzyme catalyses Rb(+)(in) = Rb(+)(out). The catalysed reaction is Li(+)(in) = Li(+)(out). It catalyses the reaction Cs(+)(in) = Cs(+)(out). Pore-forming subunit of the cone cyclic nucleotide-gated channel. Mediates cone photoresponses at bright light converting transient changes in intracellular cGMP levels into electrical signals. In the dark, cGMP levels are high and keep the channel open enabling a steady inward current carried by Na(+) and Ca(2+) ions that leads to membrane depolarization and neurotransmitter release from synaptic terminals. Upon photon absorption cGMP levels decline leading to channel closure and membrane hyperpolarization that ultimately slows neurotransmitter release and signals the presence of light, the end point of the phototransduction cascade. Conducts cGMP- and cAMP-gated ion currents, with permeability for monovalent and divalent cations. This Mus musculus (Mouse) protein is Cyclic nucleotide-gated channel beta-3.